Reading from the N-terminus, the 597-residue chain is Centrosomal protein of 70 kDa (597 aa).

The disordered stretch occupies residues 1 to 24 (MFPVAPKPQDSNQPSDRLMTEKQQ). Coiled-coil stretches lie at residues 66–179 (MRQN…QTEV) and 254–320 (TYKG…QELI). The stretch at 483–516 (NGVYPRMNEVYTRLGEMNNAVRNLQELLELDSSS) is one TPR repeat.

Directly interacts with tubulin-gamma; this interaction determines centrosomal localization.

The protein localises to the cytoplasm. It localises to the cytoskeleton. The protein resides in the microtubule organizing center. It is found in the centrosome. In terms of biological role, plays a role in the organization of both preexisting and nascent microtubules in interphase cells. During mitosis, required for the organization and orientation of the mitotic spindle. The protein is Centrosomal protein of 70 kDa (CEP70) of Macaca fascicularis (Crab-eating macaque).